A 405-amino-acid chain; its full sequence is Mitochondrial outer membrane protein SLC25A46 (405 aa).

The interval 1–77 (MTSRRPDSFE…PDEAQSAAPP (77 aa)) is disordered. A compositionally biased stretch (low complexity) spans 22–37 (FSGGYSGRSFNNSSSS). One copy of the Solcar 1 repeat lies at 80–171 (QLNRFAGFGI…GIISECTPLP (92 aa)). The next 6 membrane-spanning stretches (helical) occupy residues 87–107 (FGIGLASLFTENVLAHPCIVF), 151–171 (FVVQGVTLGTEGIISECTPLP), 183–203 (VVGHLVLKGLTYVVAMPFYSA), 242–262 (LLPLWNLVLPTVLHGILHYII), 302–322 (FPELMASFAASLCADVLLFPL), and 371–391 (MGFYKGFGSIVVQYSLHATVL). The stretch at 299–401 (DAYFPELMAS…QITKMIYSTL (103 aa)) is one Solcar 2 repeat.

This sequence belongs to the mitochondrial carrier (TC 2.A.29) family.

It localises to the mitochondrion outer membrane. Functionally, transmembrane protein of the mitochondrial outer membrane that controls mitochondrial organization. May regulate the biogenesis and dynamics of mitochondrial cristae, the inwards folds of the inner mitochondrial membrane. Could regulate mitochondrial lipid homeostasis and thereby mitochondrial fission. This is Mitochondrial outer membrane protein SLC25A46 (slc25a46) from Danio rerio (Zebrafish).